We begin with the raw amino-acid sequence, 568 residues long: Phosphoribosylaminoimidazole carboxylase (568 aa).

Residues 110-298 (KNHLIKHDVA…QFEAHVRAVT (189 aa)) enclose the ATP-grasp domain. Residue 138 to 193 (GEKFGYPYMLKSRTLAYDGRGNFVVKDKSYCEKALEFLKDRPLYAEKWCPFTKELA) participates in ATP binding.

In the C-terminal section; belongs to the AIR carboxylase family. Class I subfamily.

The enzyme catalyses 5-amino-1-(5-phospho-D-ribosyl)imidazole-4-carboxylate + H(+) = 5-amino-1-(5-phospho-beta-D-ribosyl)imidazole + CO2. It participates in purine metabolism; IMP biosynthesis via de novo pathway; 5-amino-1-(5-phospho-D-ribosyl)imidazole-4-carboxylate from 5-amino-1-(5-phospho-D-ribosyl)imidazole (carboxylase route): step 1/1. The protein is Phosphoribosylaminoimidazole carboxylase (ADE2) of Candida albicans (strain SC5314 / ATCC MYA-2876) (Yeast).